A 180-amino-acid chain; its full sequence is Bifunctional protein PyrR (180 aa).

The PRPP-binding motif lies at 101-113 (LIVVDDVLFTGRT).

It belongs to the purine/pyrimidine phosphoribosyltransferase family. PyrR subfamily. Homodimer and homohexamer; in equilibrium.

The catalysed reaction is UMP + diphosphate = 5-phospho-alpha-D-ribose 1-diphosphate + uracil. Regulates transcriptional attenuation of the pyrimidine nucleotide (pyr) operon by binding in a uridine-dependent manner to specific sites on pyr mRNA. This disrupts an antiterminator hairpin in the RNA and favors formation of a downstream transcription terminator, leading to a reduced expression of downstream genes. Its function is as follows. Also displays a weak uracil phosphoribosyltransferase activity which is not physiologically significant. The protein is Bifunctional protein PyrR of Bacillus pumilus (strain SAFR-032).